Here is a 132-residue protein sequence, read N- to C-terminus: Small ribosomal subunit protein uS8c (132 aa).

Belongs to the universal ribosomal protein uS8 family. As to quaternary structure, part of the 30S ribosomal subunit.

It is found in the plastid. The protein resides in the chloroplast. In terms of biological role, one of the primary rRNA binding proteins, it binds directly to 16S rRNA central domain where it helps coordinate assembly of the platform of the 30S subunit. The polypeptide is Small ribosomal subunit protein uS8c (rps8) (Marchantia polymorpha (Common liverwort)).